The chain runs to 150 residues: MVLCFPLLLLLLVLWGPVCLLHAWPKHLTRAHWFEIQHIQPSPLQCNRAMSGINNYTQHCKHQNTFRHDSFQNVAAVCDLLSIICKNRQHNCHQSSKPVNMTDCRLTSGKYPQCRHSAAAQYKFFIIACDPPQKSDPPYKLVPVHLDSIL.

Positions 1–23 (MVLCFPLLLLLLVLWGPVCLLHA) are cleaved as a signal peptide. His38 acts as the Proton acceptor in catalysis. 4 cysteine pairs are disulfide-bonded: Cys46-Cys104, Cys60-Cys114, Cys78-Cys129, and Cys85-Cys92. Asn55 carries an N-linked (GlcNAc...) asparagine glycan. Substrate contacts are provided by residues 61–65 (KHQNT) and Lys86. N-linked (GlcNAc...) asparagine glycosylation occurs at Asn100. A substrate-binding site is contributed by Arg105. His145 (proton donor) is an active-site residue.

This sequence belongs to the pancreatic ribonuclease family. Interacts (via N-terminus) with bacterial lipopolysaccharide (LPS).

It is found in the secreted. The protein resides in the lysosome. It localises to the cytoplasmic granule. In terms of biological role, ribonuclease which shows a preference for the pyrimidines uridine and cytosine. Has potent antibacterial activity against a range of Gram-positive and Gram-negative bacteria, including P.aeruginosa, A.baumanii, M.luteus, S.aureus, E.faecalis, E.faecium, S.saprophyticus and E.coli. Causes loss of bacterial membrane integrity, and also promotes agglutination of Gram-negative bacteria. Probably contributes to urinary tract sterility. Bactericidal activity is independent of RNase activity. This Miopithecus talapoin (Angolan talapoin) protein is Ribonuclease K6 (RNASE6).